Here is a 362-residue protein sequence, read N- to C-terminus: Diphosphomevalonate decarboxylase (362 aa).

Residues 17 to 20, R72, 150 to 155, and T206 contribute to the (R)-5-diphosphomevalonate site; these read YWGK and SGSACR.

It belongs to the diphosphomevalonate decarboxylase family. As to quaternary structure, homodimer.

It carries out the reaction (R)-5-diphosphomevalonate + ATP = isopentenyl diphosphate + ADP + phosphate + CO2. It participates in isoprenoid biosynthesis; isopentenyl diphosphate biosynthesis via mevalonate pathway; isopentenyl diphosphate from (R)-mevalonate: step 3/3. Diphosphomevalonate decarboxylase; part of the second module of ergosterol biosynthesis pathway that includes the middle steps of the pathway. MVD1 converts diphosphomevalonate into isopentenyl diphosphate. The second module is carried out in the vacuole and involves the formation of farnesyl diphosphate, which is also an important intermediate in the biosynthesis of ubiquinone, dolichol, heme and prenylated proteins. Activity by the mevalonate kinase ERG12 first converts mevalonate into 5-phosphomevalonate. 5-phosphomevalonate is then further converted to 5-diphosphomevalonate by the phosphomevalonate kinase ERG8. The diphosphomevalonate decarboxylase MVD then produces isopentenyl diphosphate. The isopentenyl-diphosphate delta-isomerase IDI1 then catalyzes the 1,3-allylic rearrangement of the homoallylic substrate isopentenyl (IPP) to its highly electrophilic allylic isomer, dimethylallyl diphosphate (DMAPP). Finally the farnesyl diphosphate synthase ERG20 catalyzes the sequential condensation of isopentenyl pyrophosphate with dimethylallyl pyrophosphate, and then with the resultant geranylpyrophosphate to the ultimate product farnesyl pyrophosphate. The sequence is that of Diphosphomevalonate decarboxylase from Candida albicans (strain SC5314 / ATCC MYA-2876) (Yeast).